The following is a 256-amino-acid chain: Cysteine-rich repeat secretory protein 29 (256 aa).

A signal peptide spans 1-26 (MSSVFGSVHILAMIAIQLLLIHSVSS). 2 consecutive Gnk2-homologous domains span residues 33-136 (YLHH…SVAS) and 142-253 (YEND…LYPF).

This sequence belongs to the cysteine-rich repeat secretory protein family.

It is found in the secreted. In Arabidopsis thaliana (Mouse-ear cress), this protein is Cysteine-rich repeat secretory protein 29 (CRRSP29).